A 753-amino-acid chain; its full sequence is Polyadenylate-binding protein, cytoplasmic and nuclear (753 aa).

Low complexity predominate over residues 1-43; that stretch reads MSAEASTTPAAETPVNGTPETSTTPAAPAAEATAAETAAPSTS. The interval 1 to 49 is disordered; the sequence is MSAEASTTPAAETPVNGTPETSTTPAAPAAEATAAETAAPSTSQPHSAS. RRM domains lie at 48–126, 136–213, 229–306, and 332–460; these read ASLY…WSQR, GNVF…HHIS, TNVY…RAQK, and VNLY…LAQR. 3 disordered regions span residues 363 to 417, 607 to 649, and 727 to 753; these read VMRD…SDKK, RGPG…PAAG, and GTEGEAAGEAPKPKEAATEESTEENKS. The segment covering 376–417 has biased composition (basic and acidic residues); it reads DSDKEKKEESKEEKPEAAEKTEEAAKESGDDQDKENKKSDKK. Positions 607–619 are enriched in gly residues; it reads RGPGYGQGRGGVP. The span at 633–649 shows a compositional bias: low complexity; it reads QNAQPAAGRGEEAPAAG. The PABC domain maps to 647–724; sequence AAGLTAQSLA…ALSVYDEYMK (78 aa). Residues 737-753 show a composition bias toward basic and acidic residues; the sequence is PKPKEAATEESTEENKS.

This sequence belongs to the polyadenylate-binding protein type-1 family.

Its subcellular location is the cytoplasm. The protein localises to the nucleus. In terms of biological role, binds the poly(A) tail of mRNA. Appears to be an important mediator of the multiple roles of the poly(A) tail in mRNA biogenesis, stability and translation. In the nucleus, involved in both mRNA cleavage and polyadenylation. Is also required for efficient mRNA export to the cytoplasm. Acts in concert with a poly(A)-specific nuclease (PAN) to affect poly(A) tail shortening, which may occur concomitantly with either nucleocytoplasmic mRNA transport or translational initiation. In the cytoplasm, stimulates translation initiation and regulates mRNA decay through translation termination-coupled poly(A) shortening, probably mediated by PAN. This is Polyadenylate-binding protein, cytoplasmic and nuclear (pab1) from Aspergillus terreus (strain NIH 2624 / FGSC A1156).